We begin with the raw amino-acid sequence, 290 residues long: Manganese efflux system protein MneS (290 aa).

The next 6 membrane-spanning stretches (helical) occupy residues Leu-15–Phe-35, Ala-39–Leu-61, Ile-82–Ala-102, Thr-113–Tyr-133, Ala-159–Ile-179, and Thr-181–Glu-201.

Belongs to the cation diffusion facilitator (CDF) transporter (TC 2.A.4) family.

It localises to the cell membrane. Its function is as follows. Secondary manganese efflux system. May prevent manganese intoxication. This chain is Manganese efflux system protein MneS, found in Bacillus subtilis (strain 168).